The following is an 879-amino-acid chain: Alanine--tRNA ligase 1 (879 aa).

Residues H566, H570, C668, and H672 each contribute to the Zn(2+) site.

It belongs to the class-II aminoacyl-tRNA synthetase family. Zn(2+) is required as a cofactor.

The protein localises to the cytoplasm. The enzyme catalyses tRNA(Ala) + L-alanine + ATP = L-alanyl-tRNA(Ala) + AMP + diphosphate. Functionally, catalyzes the attachment of alanine to tRNA(Ala) in a two-step reaction: alanine is first activated by ATP to form Ala-AMP and then transferred to the acceptor end of tRNA(Ala). Also edits incorrectly charged Ser-tRNA(Ala) and Gly-tRNA(Ala) via its editing domain. The sequence is that of Alanine--tRNA ligase 1 from Lachnoclostridium phytofermentans (strain ATCC 700394 / DSM 18823 / ISDg) (Clostridium phytofermentans).